We begin with the raw amino-acid sequence, 660 residues long: tRNA 5-methylaminomethyl-2-thiouridine biosynthesis bifunctional protein MnmC (660 aa).

The tRNA (mnm(5)s(2)U34)-methyltransferase stretch occupies residues 1–241; sequence MNDHPAQDAF…KREILRGHLQ (241 aa). The segment at 268–660 is FAD-dependent cmnm(5)s(2)U34 oxidoreductase; the sequence is IGAGLAGCAT…FLLRKLIRGT (393 aa).

This sequence in the N-terminal section; belongs to the methyltransferase superfamily. tRNA (mnm(5)s(2)U34)-methyltransferase family. It in the C-terminal section; belongs to the DAO family. It depends on FAD as a cofactor.

The protein resides in the cytoplasm. The catalysed reaction is 5-aminomethyl-2-thiouridine(34) in tRNA + S-adenosyl-L-methionine = 5-methylaminomethyl-2-thiouridine(34) in tRNA + S-adenosyl-L-homocysteine + H(+). Functionally, catalyzes the last two steps in the biosynthesis of 5-methylaminomethyl-2-thiouridine (mnm(5)s(2)U) at the wobble position (U34) in tRNA. Catalyzes the FAD-dependent demodification of cmnm(5)s(2)U34 to nm(5)s(2)U34, followed by the transfer of a methyl group from S-adenosyl-L-methionine to nm(5)s(2)U34, to form mnm(5)s(2)U34. The sequence is that of tRNA 5-methylaminomethyl-2-thiouridine biosynthesis bifunctional protein MnmC from Stutzerimonas stutzeri (strain A1501) (Pseudomonas stutzeri).